Consider the following 77-residue polypeptide: U8-lycotoxin-Ls1s (77 aa).

Positions 1-20 (MKLIIFTGLVLFAIVSLIEA) are cleaved as a signal peptide. The propeptide occupies 21 to 26 (QAENER).

Belongs to the neurotoxin 19 (CSTX) family. 08 (U8-Lctx) subfamily. In terms of processing, contains 4 disulfide bonds. In terms of tissue distribution, expressed by the venom gland.

The protein resides in the secreted. In Lycosa singoriensis (Wolf spider), this protein is U8-lycotoxin-Ls1s.